We begin with the raw amino-acid sequence, 236 residues long: MYEGVHAHPDGNATVARFAETAASRGYDGIVVRNHGDAQTDYDADAVAAEYGVEVVSGIEIRTDDTAQASGLVGNYRSKRDIVCVHGGELNRFAVEEPKVDVLAHPMRDGDVNHVLAKAAAENGVHFEFNFGRVLRADGGKRVQAIQGLRKLRELVDQYDAPYVVSADPESHLELRSSRDLAAVGETVGFDREAITDGLAAWADIVERNRRRRSAAVVEPGVRIERADGETDDSRE.

This sequence belongs to the eukaryotic/archaeal RNase P protein component 3 family. Consists of a catalytic RNA component and at least 4-5 protein subunits.

Its subcellular location is the cytoplasm. It catalyses the reaction Endonucleolytic cleavage of RNA, removing 5'-extranucleotides from tRNA precursor.. Functionally, part of ribonuclease P, a protein complex that generates mature tRNA molecules by cleaving their 5'-ends. The chain is Ribonuclease P protein component 3 from Natronomonas pharaonis (strain ATCC 35678 / DSM 2160 / CIP 103997 / JCM 8858 / NBRC 14720 / NCIMB 2260 / Gabara) (Halobacterium pharaonis).